The sequence spans 456 residues: PTS system sucrose-specific EIIBC component (456 aa).

The 84-residue stretch at 4–87 folds into the PTS EIIB type-1 domain; it reads EQISRSLLPL…IQAAGISESS (84 aa). Cys26 serves as the catalytic Phosphocysteine intermediate; for EIIB activity. A PTS EIIC type-1 domain is found at 107–456; the sequence is RLLSNIFVPI…LTLKYKTDAE (350 aa). 10 helical membrane passes run 112–132, 144–164, 181–201, 209–229, 247–267, 288–308, 329–349, 360–380, 388–408, and 428–448; these read IFVP…LLGM, ALYI…PILI, TLGG…AAGF, IEVA…AVWF, LILT…LLIG, AGWL…ITGI, FLLP…FAVW, ITLP…IFGI, FIAA…MHVY, and LLNY…LSLT.

The protein localises to the cell inner membrane. The enzyme catalyses N(pros)-phospho-L-histidyl-[protein](out) + sucrose = sucrose 6(G)-phosphate(in) + L-histidyl-[protein]. The phosphoenolpyruvate-dependent sugar phosphotransferase system (sugar PTS), a major carbohydrate active transport system, catalyzes the phosphorylation of incoming sugar substrates concomitantly with their translocation across the cell membrane. This system is involved in sucrose transport. The chain is PTS system sucrose-specific EIIBC component from Klebsiella pneumoniae.